The following is a 63-amino-acid chain: MNKVHFALFLLVLTVLAVSGFPSENAPTGGCPLSDNVCSSYCKKNKFGNEGKCHGTICKCSIK.

Residues 1–20 (MNKVHFALFLLVLTVLAVSG) form the signal peptide. Intrachain disulfides connect Cys31/Cys53, Cys38/Cys58, and Cys42/Cys60.

The protein belongs to the long chain scorpion toxin family. Class 2 subfamily. In terms of tissue distribution, expressed by the venom gland.

It is found in the secreted. Functionally, this recombinant toxin selectively inhibits mouse voltage-gated potassium channel Kv1.3/KCNA3 (IC(50)=24.73 nM). The protein is Potassium channel toxin Sp4 of Scorpiops pococki (Scorpion).